The sequence spans 433 residues: Ribosome biogenesis protein WDR12 homolog (433 aa).

Residues 21 to 102 (VEVFVVSYRH…ESVISIECIV (82 aa)) form a ubiquitin-like (UBL) domain region. WD repeat units follow at residues 114–151 (ALLDWIGAIRCNDKFIASATYGGELVLWNHYGKKLTSS), 153–194 (LHEE…SSTF), 203–242 (GHERSVEAIAVNTDGTRTVSGGFDKMLKVWNTDKDDTSTV), 270–310 (GHKD…QINT), 312–351 (AAKKAFTSISVCCSSGMLITGSVDPVVRLWDPRSHEGTLV), 357–397 (GHCG…TPLY), and 401–433 (GHSDRILCCDWSVNELIVSGGVDCTMKTYRRKM).

Belongs to the WD repeat WDR12/YTM1 family.

The protein localises to the nucleus. Its subcellular location is the nucleolus. The protein resides in the nucleoplasm. Functionally, required for maturation of ribosomal RNAs and formation of the large ribosomal subunit. The sequence is that of Ribosome biogenesis protein WDR12 homolog from Brugia malayi (Filarial nematode worm).